A 237-amino-acid polypeptide reads, in one-letter code: DNA repair protein RecO (237 aa).

It belongs to the RecO family.

In terms of biological role, involved in DNA repair and RecF pathway recombination. This chain is DNA repair protein RecO, found in Actinobacillus succinogenes (strain ATCC 55618 / DSM 22257 / CCUG 43843 / 130Z).